The primary structure comprises 158 residues: Endoribonuclease YbeY (158 aa).

Zn(2+) contacts are provided by H118, H122, and H128.

It belongs to the endoribonuclease YbeY family. The cofactor is Zn(2+).

It is found in the cytoplasm. Its function is as follows. Single strand-specific metallo-endoribonuclease involved in late-stage 70S ribosome quality control and in maturation of the 3' terminus of the 16S rRNA. The protein is Endoribonuclease YbeY of Bartonella henselae (strain ATCC 49882 / DSM 28221 / CCUG 30454 / Houston 1) (Rochalimaea henselae).